Consider the following 400-residue polypeptide: 1-deoxy-D-xylulose 5-phosphate reductoisomerase (400 aa).

NADPH-binding residues include Thr-10, Gly-11, Ser-12, Ile-13, Gly-36, Asn-38, and Asn-124. Residue Lys-125 coordinates 1-deoxy-D-xylulose 5-phosphate. Position 126 (Glu-126) interacts with NADPH. A Mn(2+)-binding site is contributed by Asp-150. Residues Ser-151, Glu-152, Ser-186, and His-209 each contribute to the 1-deoxy-D-xylulose 5-phosphate site. A Mn(2+)-binding site is contributed by Glu-152. Gly-215 contributes to the NADPH binding site. 1-deoxy-D-xylulose 5-phosphate-binding residues include Ser-222, Asn-227, Lys-228, and Glu-231. Position 231 (Glu-231) interacts with Mn(2+).

This sequence belongs to the DXR family. It depends on Mg(2+) as a cofactor. Requires Mn(2+) as cofactor.

The enzyme catalyses 2-C-methyl-D-erythritol 4-phosphate + NADP(+) = 1-deoxy-D-xylulose 5-phosphate + NADPH + H(+). The protein operates within isoprenoid biosynthesis; isopentenyl diphosphate biosynthesis via DXP pathway; isopentenyl diphosphate from 1-deoxy-D-xylulose 5-phosphate: step 1/6. In terms of biological role, catalyzes the NADPH-dependent rearrangement and reduction of 1-deoxy-D-xylulose-5-phosphate (DXP) to 2-C-methyl-D-erythritol 4-phosphate (MEP). This is 1-deoxy-D-xylulose 5-phosphate reductoisomerase from Aliivibrio salmonicida (strain LFI1238) (Vibrio salmonicida (strain LFI1238)).